The primary structure comprises 57 residues: Plasma membrane proteolipid 3 (57 aa).

A helical membrane pass occupies residues 34–54 (INILLTILGYLPGIVHALYII).

This sequence belongs to the UPF0057 (PMP3) family.

Its subcellular location is the cell membrane. Its function is as follows. Plays a role in the regulation of membrane potential. Could mediate a proton leak. The sequence is that of Plasma membrane proteolipid 3 (pmp-1) from Neurospora crassa (strain ATCC 24698 / 74-OR23-1A / CBS 708.71 / DSM 1257 / FGSC 987).